We begin with the raw amino-acid sequence, 460 residues long: Cysteine--tRNA ligase (460 aa).

Residue cysteine 29 coordinates Zn(2+). The short motif at alanine 31 to histidine 41 is the 'HIGH' region element. Zn(2+)-binding residues include cysteine 212, histidine 237, and glutamate 241. The 'KMSKS' region motif lies at lysine 268–serine 272. Lysine 271 contributes to the ATP binding site.

The protein belongs to the class-I aminoacyl-tRNA synthetase family. In terms of assembly, monomer. Zn(2+) serves as cofactor.

It localises to the cytoplasm. The catalysed reaction is tRNA(Cys) + L-cysteine + ATP = L-cysteinyl-tRNA(Cys) + AMP + diphosphate. This chain is Cysteine--tRNA ligase, found in Corynebacterium glutamicum (strain R).